The chain runs to 240 residues: UDP-2,3-diacylglucosamine hydrolase (240 aa).

5 residues coordinate Mn(2+): aspartate 9, histidine 11, aspartate 43, asparagine 81, and histidine 116. 81 to 82 (NR) contributes to the substrate binding site. Substrate is bound by residues aspartate 124, serine 162, lysine 166, lysine 169, and histidine 197. The Mn(2+) site is built by histidine 197 and histidine 199.

Belongs to the LpxH family. It depends on Mn(2+) as a cofactor.

It is found in the cell inner membrane. The enzyme catalyses UDP-2-N,3-O-bis[(3R)-3-hydroxytetradecanoyl]-alpha-D-glucosamine + H2O = 2-N,3-O-bis[(3R)-3-hydroxytetradecanoyl]-alpha-D-glucosaminyl 1-phosphate + UMP + 2 H(+). It participates in glycolipid biosynthesis; lipid IV(A) biosynthesis; lipid IV(A) from (3R)-3-hydroxytetradecanoyl-[acyl-carrier-protein] and UDP-N-acetyl-alpha-D-glucosamine: step 4/6. Its function is as follows. Hydrolyzes the pyrophosphate bond of UDP-2,3-diacylglucosamine to yield 2,3-diacylglucosamine 1-phosphate (lipid X) and UMP by catalyzing the attack of water at the alpha-P atom. Involved in the biosynthesis of lipid A, a phosphorylated glycolipid that anchors the lipopolysaccharide to the outer membrane of the cell. The sequence is that of UDP-2,3-diacylglucosamine hydrolase from Neisseria meningitidis serogroup B (strain ATCC BAA-335 / MC58).